The primary structure comprises 635 residues: DNA-directed RNA polymerase subunit gamma (635 aa).

Zn(2+) contacts are provided by Cys74, Cys76, Cys89, and Cys92. Mg(2+) is bound by residues Asp471, Asp473, and Asp475.

The protein belongs to the RNA polymerase beta' chain family. RpoC1 subfamily. In terms of assembly, in cyanobacteria the RNAP catalytic core is composed of 2 alpha, 1 beta, 1 beta', 1 gamma and 1 omega subunit. When a sigma factor is associated with the core the holoenzyme is formed, which can initiate transcription. It depends on Mg(2+) as a cofactor. Requires Zn(2+) as cofactor.

It carries out the reaction RNA(n) + a ribonucleoside 5'-triphosphate = RNA(n+1) + diphosphate. Functionally, DNA-dependent RNA polymerase catalyzes the transcription of DNA into RNA using the four ribonucleoside triphosphates as substrates. The polypeptide is DNA-directed RNA polymerase subunit gamma (Prochlorococcus marinus (strain NATL2A)).